A 157-amino-acid polypeptide reads, in one-letter code: 2-C-methyl-D-erythritol 2,4-cyclodiphosphate synthase (157 aa).

The a divalent metal cation site is built by Asp8 and His10. 4-CDP-2-C-methyl-D-erythritol 2-phosphate is bound by residues 8–10 and 34–35; these read DVH and HS. Residue His42 coordinates a divalent metal cation. 4-CDP-2-C-methyl-D-erythritol 2-phosphate is bound by residues 56 to 58, 61 to 65, 132 to 135, Phe139, and Arg142; these read DIG, FPDSD, and TTTE.

Belongs to the IspF family. Homotrimer. Requires a divalent metal cation as cofactor.

It catalyses the reaction 4-CDP-2-C-methyl-D-erythritol 2-phosphate = 2-C-methyl-D-erythritol 2,4-cyclic diphosphate + CMP. It functions in the pathway isoprenoid biosynthesis; isopentenyl diphosphate biosynthesis via DXP pathway; isopentenyl diphosphate from 1-deoxy-D-xylulose 5-phosphate: step 4/6. Functionally, involved in the biosynthesis of isopentenyl diphosphate (IPP) and dimethylallyl diphosphate (DMAPP), two major building blocks of isoprenoid compounds. Catalyzes the conversion of 4-diphosphocytidyl-2-C-methyl-D-erythritol 2-phosphate (CDP-ME2P) to 2-C-methyl-D-erythritol 2,4-cyclodiphosphate (ME-CPP) with a corresponding release of cytidine 5-monophosphate (CMP). This is 2-C-methyl-D-erythritol 2,4-cyclodiphosphate synthase from Syntrophomonas wolfei subsp. wolfei (strain DSM 2245B / Goettingen).